The chain runs to 628 residues: Biosynthetic arginine decarboxylase (628 aa).

An N6-(pyridoxal phosphate)lysine modification is found at lysine 99. 279–289 (VDVGGGLGIDY) contributes to the substrate binding site.

It belongs to the Orn/Lys/Arg decarboxylase class-II family. SpeA subfamily. Requires Mg(2+) as cofactor. It depends on pyridoxal 5'-phosphate as a cofactor.

It carries out the reaction L-arginine + H(+) = agmatine + CO2. Its function is as follows. Catalyzes the biosynthesis of agmatine from arginine. The sequence is that of Biosynthetic arginine decarboxylase from Xanthomonas campestris pv. campestris (strain ATCC 33913 / DSM 3586 / NCPPB 528 / LMG 568 / P 25).